Reading from the N-terminus, the 144-residue chain is Transcriptional regulator SlyA (144 aa).

Residues 2–135 (ESPLGSDLSR…LSQMISKLEK (134 aa)) form the HTH marR-type domain. Positions 49–72 (QIQLAKAIGIEQPSLVRTLDQLEE) form a DNA-binding region, H-T-H motif.

Belongs to the SlyA family. In terms of assembly, homodimer.

Functionally, transcription regulator that can specifically activate or repress expression of target genes. The protein is Transcriptional regulator SlyA of Wigglesworthia glossinidia brevipalpis.